The following is a 1415-amino-acid chain: DNA-directed RNA polymerase subunit beta' (1415 aa).

Residues C72, C74, C87, and C90 each contribute to the Zn(2+) site. Residues D463, D465, and D467 each coordinate Mg(2+). Residues C812, C886, C893, and C896 each contribute to the Zn(2+) site.

This sequence belongs to the RNA polymerase beta' chain family. In terms of assembly, the RNAP catalytic core consists of 2 alpha, 1 beta, 1 beta' and 1 omega subunit. When a sigma factor is associated with the core the holoenzyme is formed, which can initiate transcription. The cofactor is Mg(2+). It depends on Zn(2+) as a cofactor.

The catalysed reaction is RNA(n) + a ribonucleoside 5'-triphosphate = RNA(n+1) + diphosphate. In terms of biological role, DNA-dependent RNA polymerase catalyzes the transcription of DNA into RNA using the four ribonucleoside triphosphates as substrates. This is DNA-directed RNA polymerase subunit beta' from Dinoroseobacter shibae (strain DSM 16493 / NCIMB 14021 / DFL 12).